The chain runs to 42 residues: Protein Tat (42 aa).

The segment at 1–24 (MEPVDPNLEPWNHPGSQPKTACNQ) is interaction with human CREBBP. The interval 22-37 (CNQCYCKKCSYHCLVC) is cysteine-rich. Residue Lys28 is modified to N6-acetyllysine; by host PCAF.

The protein belongs to the lentiviruses Tat family. Interacts with host CCNT1. Associates with the P-TEFb complex composed at least of Tat, P-TEFb (CDK9 and CCNT1), TAR RNA, RNA Pol II. Recruits the HATs CREBBP, TAF1/TFIID, EP300, PCAF and GCN5L2. Interacts with host KAT5/Tip60; this interaction targets the latter to degradation. Interacts with the host deacetylase SIRT1. Interacts with host capping enzyme RNGTT; this interaction stimulates RNGTT. Binds to host KDR, and to the host integrins ITGAV/ITGB3 and ITGA5/ITGB1. Interacts with host KPNB1/importin beta-1 without previous binding to KPNA1/importin alpha-1. Interacts with EIF2AK2. Interacts with host nucleosome assembly protein NAP1L1; this interaction may be required for the transport of Tat within the nucleus, since the two proteins interact at the nuclear rim. Interacts with host C1QBP/SF2P32; this interaction involves lysine-acetylated Tat. Interacts with the host chemokine receptors CCR2, CCR3 and CXCR4. Interacts with host DPP4/CD26; this interaction may trigger an anti-proliferative effect. Interacts with host LDLR. Interacts with the host extracellular matrix metalloproteinase MMP1. Interacts with host PRMT6; this interaction mediates Tat's methylation. Interacts with, and is ubiquitinated by MDM2/Hdm2. Interacts with host PSMC3 and HTATIP2. Interacts with STAB1; this interaction may overcome SATB1-mediated repression of IL2 and IL2RA (interleukin) in T cells by binding to the same domain than HDAC1. Interacts (when acetylated) with human CDK13, thereby increasing HIV-1 mRNA splicing and promoting the production of the doubly spliced HIV-1 protein Nef. Interacts with host TBP; this interaction modulates the activity of transcriptional pre-initiation complex. Interacts with host RELA. Interacts with host PLSCR1; this interaction negatively regulates Tat transactivation activity by altering its subcellular distribution. Post-translationally, phosphorylated by EIF2AK2 on serine and threonine residues adjacent to the basic region important for TAR RNA binding and function. Phosphorylation of Tat by EIF2AK2 is dependent on the prior activation of EIF2AK2 by dsRNA. In terms of processing, asymmetrical arginine methylation by host PRMT6 seems to diminish the transactivation capacity of Tat and affects the interaction with host CCNT1. Polyubiquitination by host MDM2 does not target Tat to degradation, but activates its transactivation function and fosters interaction with CCNT1 and TAR RNA.

The protein resides in the host nucleus. It localises to the host nucleolus. The protein localises to the host cytoplasm. It is found in the secreted. Its function is as follows. Transcriptional activator that increases RNA Pol II processivity, thereby increasing the level of full-length viral transcripts. Recognizes a hairpin structure at the 5'-LTR of the nascent viral mRNAs referred to as the transactivation responsive RNA element (TAR) and recruits the cyclin T1-CDK9 complex (P-TEFb complex) that will in turn hyperphosphorylate the RNA polymerase II to allow efficient elongation. The CDK9 component of P-TEFb and other Tat-activated kinases hyperphosphorylate the C-terminus of RNA Pol II that becomes stabilized and much more processive. Other factors such as HTATSF1/Tat-SF1, SUPT5H/SPT5, and HTATIP2 are also important for Tat's function. Besides its effect on RNA Pol II processivity, Tat induces chromatin remodeling of proviral genes by recruiting the histone acetyltransferases (HATs) CREBBP, EP300 and PCAF to the chromatin. This also contributes to the increase in proviral transcription rate, especially when the provirus integrates in transcriptionally silent region of the host genome. To ensure maximal activation of the LTR, Tat mediates nuclear translocation of NF-kappa-B by interacting with host RELA. Through its interaction with host TBP, Tat may also modulate transcription initiation. Tat can reactivate a latently infected cell by penetrating in it and transactivating its LTR promoter. In the cytoplasm, Tat is thought to act as a translational activator of HIV-1 mRNAs. Functionally, extracellular circulating Tat can be endocytosed by surrounding uninfected cells via the binding to several surface receptors such as CD26, CXCR4, heparan sulfate proteoglycans (HSPG) or LDLR. Neurons are rarely infected, but they internalize Tat via their LDLR. Through its interaction with nuclear HATs, Tat is potentially able to control the acetylation-dependent cellular gene expression. Modulates the expression of many cellular genes involved in cell survival, proliferation or in coding for cytokines or cytokine receptors. Tat plays a role in T-cell and neurons apoptosis. Tat induced neurotoxicity and apoptosis probably contribute to neuroAIDS. Circulating Tat also acts as a chemokine-like and/or growth factor-like molecule that binds to specific receptors on the surface of the cells, affecting many cellular pathways. In the vascular system, Tat binds to ITGAV/ITGB3 and ITGA5/ITGB1 integrins dimers at the surface of endothelial cells and competes with bFGF for heparin-binding sites, leading to an excess of soluble bFGF. The polypeptide is Protein Tat (Human immunodeficiency virus type 1 group M subtype C (isolate ETH2220) (HIV-1)).